The primary structure comprises 167 residues: Putative ripening-related protein 6 (167 aa).

An N-terminal signal peptide occupies residues 1–23 (MANAKQLALFAMLVLLLASCAAA). The disordered stretch occupies residues 28–57 (KPDPCDGGGGGVDSHLPPGMRRCSSPAVSE).

It belongs to the kiwellin family.

Its subcellular location is the secreted. In Oryza sativa subsp. japonica (Rice), this protein is Putative ripening-related protein 6.